The primary structure comprises 420 residues: Histidine--tRNA ligase (420 aa).

Belongs to the class-II aminoacyl-tRNA synthetase family. In terms of assembly, homodimer.

The protein resides in the cytoplasm. The catalysed reaction is tRNA(His) + L-histidine + ATP = L-histidyl-tRNA(His) + AMP + diphosphate + H(+). In Macrococcus caseolyticus (strain JCSC5402) (Macrococcoides caseolyticum), this protein is Histidine--tRNA ligase.